The primary structure comprises 136 residues: Protein PsiE (136 aa).

Transmembrane regions (helical) follow at residues 15–35 (ILQT…VVFL), 55–75 (YELV…ALIV), 82–102 (FHFP…RLII), and 108–128 (PLDV…LWLC).

The protein belongs to the PsiE family.

The protein localises to the cell inner membrane. The polypeptide is Protein PsiE (Escherichia coli (strain UTI89 / UPEC)).